Consider the following 401-residue polypeptide: tRNA N6-adenosine threonylcarbamoyltransferase (401 aa).

Positions 111 and 115 each coordinate Fe cation. Substrate-binding positions include 191 to 195 (LASGG), aspartate 223, glycine 236, and asparagine 336. Aspartate 364 is a binding site for Fe cation.

It belongs to the KAE1 / TsaD family. Fe(2+) is required as a cofactor.

It is found in the cytoplasm. It carries out the reaction L-threonylcarbamoyladenylate + adenosine(37) in tRNA = N(6)-L-threonylcarbamoyladenosine(37) in tRNA + AMP + H(+). In terms of biological role, required for the formation of a threonylcarbamoyl group on adenosine at position 37 (t(6)A37) in tRNAs that read codons beginning with adenine. Is involved in the transfer of the threonylcarbamoyl moiety of threonylcarbamoyl-AMP (TC-AMP) to the N6 group of A37, together with TsaE and TsaB. TsaD likely plays a direct catalytic role in this reaction. The polypeptide is tRNA N6-adenosine threonylcarbamoyltransferase (Tropheryma whipplei (strain TW08/27) (Whipple's bacillus)).